Consider the following 188-residue polypeptide: Peptidyl-prolyl cis-trans isomerase H (188 aa).

Ala2 bears the N-acetylalanine mark. A PPIase cyclophilin-type domain is found at 14-176; the sequence is FFDVSIGGQE…WTHSLTCPAL (163 aa).

It belongs to the cyclophilin-type PPIase family. PPIase H subfamily. In terms of assembly, interacts directly with PRPF4. Part of a heteromeric complex containing PPIH, PRPF3 and PRPF4 that is stable in the absence of RNA. Component of the U4/U6-U5 tri-snRNP complex composed of the U4, U6 and U5 snRNAs and at least PRPF3, PRPF4, PRPF6, PRPF8, PRPF31, SNRNP200, TXNL4A, SNRNP40, DDX23, CD2BP2, PPIH, SNU13, EFTUD2, SART1 and USP39. Heterodimer with PRPF18. Heterodimer with PRPF18.

It is found in the nucleus speckle. Its subcellular location is the cytoplasm. The enzyme catalyses [protein]-peptidylproline (omega=180) = [protein]-peptidylproline (omega=0). Its activity is regulated as follows. Inhibited by cyclosporin A. In terms of biological role, PPIase that catalyzes the cis-trans isomerization of proline imidic peptide bonds in oligopeptides and may therefore assist protein folding. Participates in pre-mRNA splicing. May play a role in the assembly of the U4/U5/U6 tri-snRNP complex, one of the building blocks of the spliceosome. May act as a chaperone. The sequence is that of Peptidyl-prolyl cis-trans isomerase H (Ppih) from Mus musculus (Mouse).